The primary structure comprises 701 residues: Elongation factor G (701 aa).

A tr-type G domain is found at 8 to 291 (SRYRNIGIVA…AVIDFLPAPT (284 aa)). GTP contacts are provided by residues 17–24 (AHVDAGKT), 89–93 (DTPGH), and 143–146 (NKMD).

Belongs to the TRAFAC class translation factor GTPase superfamily. Classic translation factor GTPase family. EF-G/EF-2 subfamily.

The protein localises to the cytoplasm. Its function is as follows. Catalyzes the GTP-dependent ribosomal translocation step during translation elongation. During this step, the ribosome changes from the pre-translocational (PRE) to the post-translocational (POST) state as the newly formed A-site-bound peptidyl-tRNA and P-site-bound deacylated tRNA move to the P and E sites, respectively. Catalyzes the coordinated movement of the two tRNA molecules, the mRNA and conformational changes in the ribosome. This Pseudomonas fluorescens (strain Pf0-1) protein is Elongation factor G.